Reading from the N-terminus, the 447-residue chain is Gastrin/cholecystokinin type B receptor (447 aa).

Topologically, residues 1-57 (MELLKLNRSVQGTGPGPGASLCRPGAPLLNSSSVGNLSCEPPRIRGAGTRELELAIR) are extracellular. N-linked (GlcNAc...) asparagine glycosylation is found at asparagine 7, asparagine 30, and asparagine 36. A helical transmembrane segment spans residues 58–79 (ITLYAVIFLMSVGGNMLIIVVL). The Cytoplasmic portion of the chain corresponds to 80–87 (GLSRRLRT). The helical transmembrane segment at 88 to 109 (VTNAFLLSLAVSDLLLAVACMP) threads the bilayer. The Extracellular segment spans residues 110-131 (FTLLPNLMGTFIFGTVICKAVS). A disulfide bond links cysteine 127 and cysteine 205. Residues 132–150 (YLMGVSVSVSTLSLVAIAL) form a helical membrane-spanning segment. The Cytoplasmic segment spans residues 151–170 (ERYSAICRPLQARVWQTRSH). A helical transmembrane segment spans residues 171-189 (AARVIVATWLLSGLLMVPY). Topologically, residues 190-219 (PVYTVVQPVGPRVLQCVHRWPSARVRQTWS) are extracellular. A helical membrane pass occupies residues 220-242 (VLLLLLLFFIPGVVMAVAYGLIS). Over 243 to 333 (RELYLGLRFD…KLLAKKRVVR (91 aa)) the chain is Cytoplasmic. Residues 258-285 (DSQSRVRNQGGLPGAVHQNGRCRPETGA) are disordered. The helical transmembrane segment at 334–355 (MLLVIVVLFFLCWLPVYSANTW) threads the bilayer. Residues 356 to 373 (RAFDGPGAHRALSGAPIS) lie on the Extracellular side of the membrane. The helical transmembrane segment at 374–394 (FIHLLSYASACVNPLVYCFMH) threads the bilayer. Residues 395–447 (RRFRQACLETCARCCPRPPRARPRALPDEDPPTPSIASLSRLSYTTISTLGPG) are Cytoplasmic-facing. A lipid anchor (S-palmitoyl cysteine) is attached at cysteine 408.

Belongs to the G-protein coupled receptor 1 family. Isoform 1 is expressed in brain, pancreas, stomach, the colon cancer cell line LoVo and the T-lymphoblastoma Jurkat, but not in heart, placenta, liver, lung, skeletal muscle, kidney or the stomach cancer cell line AGS. Expressed at high levels in the small cell lung cancer cell line NCI-H510, at lower levels in NCI-H345, NCI-H69 and GLC-28 cell lines, not expressed in GLC-19 cell line. Within the stomach, expressed at high levels in the mucosa of the gastric fundus and at low levels in the antrum and duodenum. Isoform 2 is present in pancreatic cancer cells and colorectal cancer cells, but not in normal pancreas or colonic mucosa. Isoform 3 is expressed in brain, pancreas, stomach, the stomach cancer cell line AGS and the colon cancer cell line LoVo.

It is found in the cell membrane. Receptor for gastrin and cholecystokinin. The CCK-B receptors occur throughout the central nervous system where they modulate anxiety, analgesia, arousal, and neuroleptic activity. This receptor mediates its action by association with G proteins that activate a phosphatidylinositol-calcium second messenger system. In terms of biological role, isoform 2 is constitutively activated and may regulate cancer cell proliferation via a gastrin-independent mechanism. The chain is Gastrin/cholecystokinin type B receptor from Homo sapiens (Human).